The chain runs to 428 residues: Enolase (428 aa).

Gln163 serves as a coordination point for (2R)-2-phosphoglycerate. Glu205 acts as the Proton donor in catalysis. Residues Asp242, Glu285, and Asp312 each contribute to the Mg(2+) site. Residues Lys337, Arg366, Ser367, and Lys388 each coordinate (2R)-2-phosphoglycerate. Lys337 functions as the Proton acceptor in the catalytic mechanism.

It belongs to the enolase family. The cofactor is Mg(2+).

It localises to the cytoplasm. The protein resides in the secreted. It is found in the cell surface. It carries out the reaction (2R)-2-phosphoglycerate = phosphoenolpyruvate + H2O. It participates in carbohydrate degradation; glycolysis; pyruvate from D-glyceraldehyde 3-phosphate: step 4/5. In terms of biological role, catalyzes the reversible conversion of 2-phosphoglycerate (2-PG) into phosphoenolpyruvate (PEP). It is essential for the degradation of carbohydrates via glycolysis. This chain is Enolase, found in Novosphingobium aromaticivorans (strain ATCC 700278 / DSM 12444 / CCUG 56034 / CIP 105152 / NBRC 16084 / F199).